The following is a 495-amino-acid chain: Probable serine/threonine-protein kinase DDB_G0292354 (495 aa).

Residues W16–L275 enclose the Protein kinase domain. ATP is bound by residues I22 to I30 and K45. D136 functions as the Proton acceptor in the catalytic mechanism. The disordered stretch occupies residues E293–I469. Low complexity-rich tracts occupy residues Q295–A333 and N354–N364. Positions E385–E395 are enriched in polar residues. Low complexity predominate over residues S435–S466.

It belongs to the protein kinase superfamily. CK1 Ser/Thr protein kinase family.

This is Probable serine/threonine-protein kinase DDB_G0292354 from Dictyostelium discoideum (Social amoeba).